A 178-amino-acid chain; its full sequence is Ribulose bisphosphate carboxylase small subunit, chloroplastic (178 aa).

The transit peptide at Met1–Gln54 directs the protein to the chloroplast.

This sequence belongs to the RuBisCO small chain family. Heterohexadecamer of 8 large and 8 small subunits.

Its subcellular location is the plastid. It localises to the chloroplast. In terms of biological role, ruBisCO catalyzes two reactions: the carboxylation of D-ribulose 1,5-bisphosphate, the primary event in carbon dioxide fixation, as well as the oxidative fragmentation of the pentose substrate. Both reactions occur simultaneously and in competition at the same active site. Although the small subunit is not catalytic it is essential for maximal activity. This chain is Ribulose bisphosphate carboxylase small subunit, chloroplastic, found in Helianthus annuus (Common sunflower).